Reading from the N-terminus, the 122-residue chain is Large ribosomal subunit protein uL14 (122 aa).

It belongs to the universal ribosomal protein uL14 family. Part of the 50S ribosomal subunit. Forms a cluster with proteins L3 and L19. In the 70S ribosome, L14 and L19 interact and together make contacts with the 16S rRNA in bridges B5 and B8.

Its function is as follows. Binds to 23S rRNA. Forms part of two intersubunit bridges in the 70S ribosome. This Solidesulfovibrio magneticus (strain ATCC 700980 / DSM 13731 / RS-1) (Desulfovibrio magneticus) protein is Large ribosomal subunit protein uL14.